The chain runs to 424 residues: CinA-like protein (424 aa).

The protein belongs to the CinA family.

This chain is CinA-like protein, found in Shewanella baltica (strain OS195).